The chain runs to 388 residues: MRYLTSGESHGPQLTVIVEGVPANIEIKVEDINKEMFKRQGGYGRGRRMQIEKDTVEIVSGVRNGYTLGSPITMVVTNDDFTHWRKIMGAAPISEEERENMKRTITKPRPGHADLVGGMKYNHRDLRNVLERSSARETAARVAVGALCKVLLQQLDIDIYSRVVEIGGIKDKDFYDSETFKANLDRNDVRVIDDSIAQAMRDKIDEAKNEGDSIGGVVQVVVENMPVGVGSYVHYDRKLDGKIAQGVVSINAFKGVSFGEGFKAAEKPGSEIQDEILYNSEIGYYRGSNHLGGLEGGMSNGMPIIVNGVMKPIPTLYKPLNSVDINTKEDFKATIERSDSCAVPAASIVCEHVVAFEIAKALLEEFQSNHIEQLKQQIIERRQLNIEF.

Residues R39 and R45 each coordinate NADP(+). FMN is bound by residues 132 to 134, 251 to 252, G296, 311 to 315, and R337; these read RSS, NA, and KPIPT.

The protein belongs to the chorismate synthase family. In terms of assembly, homotetramer. The cofactor is FMNH2.

It carries out the reaction 5-O-(1-carboxyvinyl)-3-phosphoshikimate = chorismate + phosphate. Its pathway is metabolic intermediate biosynthesis; chorismate biosynthesis; chorismate from D-erythrose 4-phosphate and phosphoenolpyruvate: step 7/7. Catalyzes the anti-1,4-elimination of the C-3 phosphate and the C-6 proR hydrogen from 5-enolpyruvylshikimate-3-phosphate (EPSP) to yield chorismate, which is the branch point compound that serves as the starting substrate for the three terminal pathways of aromatic amino acid biosynthesis. This reaction introduces a second double bond into the aromatic ring system. The sequence is that of Chorismate synthase from Staphylococcus aureus (strain COL).